Here is a 209-residue protein sequence, read N- to C-terminus: Uracil phosphoribosyltransferase (209 aa).

5-phospho-alpha-D-ribose 1-diphosphate-binding positions include R79, R104, and 131–139 (DPMLATGGS). Uracil is bound by residues I194 and 199–201 (GDA). D200 contributes to the 5-phospho-alpha-D-ribose 1-diphosphate binding site.

It belongs to the UPRTase family. The cofactor is Mg(2+).

It catalyses the reaction UMP + diphosphate = 5-phospho-alpha-D-ribose 1-diphosphate + uracil. It participates in pyrimidine metabolism; UMP biosynthesis via salvage pathway; UMP from uracil: step 1/1. Allosterically activated by GTP. Its function is as follows. Catalyzes the conversion of uracil and 5-phospho-alpha-D-ribose 1-diphosphate (PRPP) to UMP and diphosphate. In Streptococcus equi subsp. zooepidemicus (strain MGCS10565), this protein is Uracil phosphoribosyltransferase.